The chain runs to 90 residues: Progonadoliberin-3 (90 aa).

The N-terminal stretch at 1-23 is a signal peptide; that stretch reads MDVSSKVVVQVLLLALVVQVTLC. Glutamine 24 carries the pyrrolidone carboxylic acid modification. Residue glycine 33 is modified to Glycine amide.

This sequence belongs to the GnRH family. Expressed in neuron cell bodies of the nucleus olfactoretinalis.

The protein localises to the secreted. Stimulates the secretion of gonadotropins. This chain is Progonadoliberin-3 (gnrh3), found in Oryzias latipes (Japanese rice fish).